Consider the following 69-residue polypeptide: Cell division protein ZapB (69 aa).

A coiled-coil region spans residues leucine 3 to aspartate 60.

This sequence belongs to the ZapB family. As to quaternary structure, homodimer. The ends of the coiled-coil dimer bind to each other, forming polymers. Interacts with FtsZ.

The protein resides in the cytoplasm. In terms of biological role, non-essential, abundant cell division factor that is required for proper Z-ring formation. It is recruited early to the divisome by direct interaction with FtsZ, stimulating Z-ring assembly and thereby promoting cell division earlier in the cell cycle. Its recruitment to the Z-ring requires functional FtsA or ZipA. The chain is Cell division protein ZapB from Chromohalobacter salexigens (strain ATCC BAA-138 / DSM 3043 / CIP 106854 / NCIMB 13768 / 1H11).